The chain runs to 274 residues: Diaminopimelate epimerase (274 aa).

Residues Asn11, Gln44, and Asn64 each coordinate substrate. Cys73 serves as the catalytic Proton donor. Substrate contacts are provided by residues 74 to 75 (GN), Asn157, Asn190, and 208 to 209 (ER). The active-site Proton acceptor is Cys217. 218-219 (GS) contacts substrate.

The protein belongs to the diaminopimelate epimerase family. In terms of assembly, homodimer.

The protein localises to the cytoplasm. The enzyme catalyses (2S,6S)-2,6-diaminopimelate = meso-2,6-diaminopimelate. The protein operates within amino-acid biosynthesis; L-lysine biosynthesis via DAP pathway; DL-2,6-diaminopimelate from LL-2,6-diaminopimelate: step 1/1. Functionally, catalyzes the stereoinversion of LL-2,6-diaminopimelate (L,L-DAP) to meso-diaminopimelate (meso-DAP), a precursor of L-lysine and an essential component of the bacterial peptidoglycan. The polypeptide is Diaminopimelate epimerase (Escherichia fergusonii (strain ATCC 35469 / DSM 13698 / CCUG 18766 / IAM 14443 / JCM 21226 / LMG 7866 / NBRC 102419 / NCTC 12128 / CDC 0568-73)).